A 256-amino-acid chain; its full sequence is Probable sulfite/organosulfonate exporter TauE (256 aa).

The next 8 helical transmembrane spans lie at 5–25 (LLLP…FQTV), 33–53 (IVMG…AAVV), 76–96 (AVAA…LVLE), 103–123 (ATLL…SAAL), 142–162 (VFGG…IFQF), 172–190 (IRCA…RTLF), 199–219 (AAVC…TLLG), and 236–256 (FGVL…AWVL).

Belongs to the 4-toluene sulfonate uptake permease (TSUP) (TC 2.A.102) family.

The protein localises to the cell inner membrane. Could be a sulfite/organosulfonate exporter with a wide substrate range, including 3-sulfolactate and 3-sulfopyruvate. In Cupriavidus necator (strain ATCC 17699 / DSM 428 / KCTC 22496 / NCIMB 10442 / H16 / Stanier 337) (Ralstonia eutropha), this protein is Probable sulfite/organosulfonate exporter TauE.